A 687-amino-acid chain; its full sequence is Translation initiation factor IF-2 (687 aa).

Positions 186–355 constitute a tr-type G domain; the sequence is KRPPIVTVMG…LLTAEMLELK (170 aa). The interval 195–202 is G1; the sequence is GHVDHGKT. Residue 195–202 participates in GTP binding; that stretch reads GHVDHGKT. A G2 region spans residues 220 to 224; it reads GITQH. Residues 241–244 form a G3 region; sequence DTPG. GTP is bound by residues 241 to 245 and 295 to 298; these read DTPGH and NKID. A G4 region spans residues 295–298; the sequence is NKID. Residues 331–333 form a G5 region; sequence SAK.

The protein belongs to the TRAFAC class translation factor GTPase superfamily. Classic translation factor GTPase family. IF-2 subfamily.

Its subcellular location is the cytoplasm. One of the essential components for the initiation of protein synthesis. Protects formylmethionyl-tRNA from spontaneous hydrolysis and promotes its binding to the 30S ribosomal subunits. Also involved in the hydrolysis of GTP during the formation of the 70S ribosomal complex. The sequence is that of Translation initiation factor IF-2 from Clostridium botulinum (strain Eklund 17B / Type B).